The primary structure comprises 689 residues: Glycine--tRNA ligase beta subunit (689 aa).

It belongs to the class-II aminoacyl-tRNA synthetase family. As to quaternary structure, tetramer of two alpha and two beta subunits.

Its subcellular location is the cytoplasm. The enzyme catalyses tRNA(Gly) + glycine + ATP = glycyl-tRNA(Gly) + AMP + diphosphate. This chain is Glycine--tRNA ligase beta subunit, found in Enterobacter sp. (strain 638).